A 435-amino-acid chain; its full sequence is Gamma-glutamyl phosphate reductase (435 aa).

It belongs to the gamma-glutamyl phosphate reductase family.

The protein resides in the cytoplasm. It catalyses the reaction L-glutamate 5-semialdehyde + phosphate + NADP(+) = L-glutamyl 5-phosphate + NADPH + H(+). It functions in the pathway amino-acid biosynthesis; L-proline biosynthesis; L-glutamate 5-semialdehyde from L-glutamate: step 2/2. In terms of biological role, catalyzes the NADPH-dependent reduction of L-glutamate 5-phosphate into L-glutamate 5-semialdehyde and phosphate. The product spontaneously undergoes cyclization to form 1-pyrroline-5-carboxylate. This is Gamma-glutamyl phosphate reductase from Nostoc punctiforme (strain ATCC 29133 / PCC 73102).